The sequence spans 193 residues: Crossover junction endodeoxyribonuclease RuvC (193 aa).

Active-site residues include D7, E68, and D141. The Mg(2+) site is built by D7, E68, and D141. Residues 174-193 are disordered; that stretch reads RQWAQATQHATRRRGVRRGM. Basic residues predominate over residues 183–193; sequence ATRRRGVRRGM.

Belongs to the RuvC family. As to quaternary structure, homodimer which binds Holliday junction (HJ) DNA. The HJ becomes 2-fold symmetrical on binding to RuvC with unstacked arms; it has a different conformation from HJ DNA in complex with RuvA. In the full resolvosome a probable DNA-RuvA(4)-RuvB(12)-RuvC(2) complex forms which resolves the HJ. Mg(2+) serves as cofactor.

Its subcellular location is the cytoplasm. It carries out the reaction Endonucleolytic cleavage at a junction such as a reciprocal single-stranded crossover between two homologous DNA duplexes (Holliday junction).. The RuvA-RuvB-RuvC complex processes Holliday junction (HJ) DNA during genetic recombination and DNA repair. Endonuclease that resolves HJ intermediates. Cleaves cruciform DNA by making single-stranded nicks across the HJ at symmetrical positions within the homologous arms, yielding a 5'-phosphate and a 3'-hydroxyl group; requires a central core of homology in the junction. The consensus cleavage sequence is 5'-(A/T)TT(C/G)-3'. Cleavage occurs on the 3'-side of the TT dinucleotide at the point of strand exchange. HJ branch migration catalyzed by RuvA-RuvB allows RuvC to scan DNA until it finds its consensus sequence, where it cleaves and resolves the cruciform DNA. This Bifidobacterium animalis subsp. lactis (strain AD011) protein is Crossover junction endodeoxyribonuclease RuvC.